The chain runs to 355 residues: Uroporphyrinogen decarboxylase (355 aa).

Substrate is bound by residues 27-31 (RQAGR), Asp77, Tyr154, Thr209, and His327.

It belongs to the uroporphyrinogen decarboxylase family. Homodimer.

Its subcellular location is the cytoplasm. The catalysed reaction is uroporphyrinogen III + 4 H(+) = coproporphyrinogen III + 4 CO2. It functions in the pathway porphyrin-containing compound metabolism; protoporphyrin-IX biosynthesis; coproporphyrinogen-III from 5-aminolevulinate: step 4/4. Functionally, catalyzes the decarboxylation of four acetate groups of uroporphyrinogen-III to yield coproporphyrinogen-III. The sequence is that of Uroporphyrinogen decarboxylase from Pseudoalteromonas atlantica (strain T6c / ATCC BAA-1087).